A 66-amino-acid polypeptide reads, in one-letter code: Large ribosomal subunit protein uL29 (66 aa).

The protein belongs to the universal ribosomal protein uL29 family.

This chain is Large ribosomal subunit protein uL29, found in Fervidobacterium nodosum (strain ATCC 35602 / DSM 5306 / Rt17-B1).